We begin with the raw amino-acid sequence, 201 residues long: MAEKFIKHTGLVVPLDAANVDTDAIIPKQFLQKVTRTGFGAHLFNDWRFLDEKGQQPNPDFVLNFPQYQGASILLARENFGCGSSREHAPWALTDYGFKVVIAPSFADIFYGNSFNNQLLPVKLSDAEVDELFALVKANPGIHFDVDLEAQEVKAGEKTYRFTIDAFRRHCMMNGLDSIGLTLQHDDAIASYEAKQPAFMN.

The protein belongs to the LeuD family. LeuD type 1 subfamily. In terms of assembly, heterodimer of LeuC and LeuD.

The enzyme catalyses (2R,3S)-3-isopropylmalate = (2S)-2-isopropylmalate. The protein operates within amino-acid biosynthesis; L-leucine biosynthesis; L-leucine from 3-methyl-2-oxobutanoate: step 2/4. Catalyzes the isomerization between 2-isopropylmalate and 3-isopropylmalate, via the formation of 2-isopropylmaleate. The sequence is that of 3-isopropylmalate dehydratase small subunit from Shigella flexneri serotype 5b (strain 8401).